The chain runs to 202 residues: Outer-membrane lipoprotein carrier protein (202 aa).

The first 21 residues, 1-21 (MKRLLVACCFLSGLISASALA), serve as a signal peptide directing secretion.

Belongs to the LolA family. As to quaternary structure, monomer.

The protein localises to the periplasm. In terms of biological role, participates in the translocation of lipoproteins from the inner membrane to the outer membrane. Only forms a complex with a lipoprotein if the residue after the N-terminal Cys is not an aspartate (The Asp acts as a targeting signal to indicate that the lipoprotein should stay in the inner membrane). The polypeptide is Outer-membrane lipoprotein carrier protein (Yersinia pestis bv. Antiqua (strain Antiqua)).